The sequence spans 106 residues: Iron-sulfur cluster assembly protein CyaY (106 aa).

It belongs to the frataxin family.

Its function is as follows. Involved in iron-sulfur (Fe-S) cluster assembly. May act as a regulator of Fe-S biogenesis. The sequence is that of Iron-sulfur cluster assembly protein CyaY from Yersinia enterocolitica serotype O:8 / biotype 1B (strain NCTC 13174 / 8081).